Consider the following 453-residue polypeptide: Transcription factor radR (453 aa).

Residues 1 to 30 (MPNNLQHQEGSYSLRSSNDVSPADDWTQTN) show a composition bias toward polar residues. Residues 1–45 (MPNNLQHQEGSYSLRSSNDVSPADDWTQTNDPKEKKRIQNRVAQR) form a disordered region. Residues 30–62 (NDPKEKKRIQNRVAQRTYRNRIRARLEELENKI) enclose the bZIP domain. The interval 33–50 (KEKKRIQNRVAQRTYRNR) is basic motif. The tract at residues 51–58 (IRARLEEL) is leucine-zipper. Residues 160–184 (APRAAQARSIAPTSTGMHQISPSYG) form a disordered region. Positions 170-181 (APTSTGMHQISP) are enriched in polar residues.

The protein belongs to the bZIP family.

It is found in the nucleus. Functionally, transcription factor that positively regulates the expression of the gene clusters that mediate the biosynthesis of pestheic acid, a diphenyl ether which is a biosynthetic precursor of the unique chloropupukeananes. The polypeptide is Transcription factor radR (Floropilus chiversii (Chaetomium chiversii)).